Reading from the N-terminus, the 671-residue chain is Putative protein kinase C delta type homolog (671 aa).

A disordered region spans residues 1–136 (MMFTRAQVRK…ITNRRGAIKH (136 aa)). The span at 14 to 27 (SNSSSQRPRSSGGS) shows a compositional bias: low complexity. A compositionally biased stretch (basic and acidic residues) spans 57-101 (ARRDQYRDRDHYGKHSFELPRQHSKEEAYHRDRESSAGGVDRGER). The span at 102–116 (SGIGGNGGGVTGGGV) shows a compositional bias: gly residues. 2 consecutive Phorbol-ester/DAG-type zinc fingers follow at residues 144–194 (GHRF…LGKC) and 216–266 (PHRF…ANLC). Positions 343-601 (FHFLAVLGKG…AGDIADHIFF (259 aa)) constitute a Protein kinase domain. Residues 349–357 (LGKGSFGKV) and K372 contribute to the ATP site. Residue D467 is the Proton acceptor of the active site. An AGC-kinase C-terminal domain is found at 602 to 671 (RPIDWGLLEK…TYTNPHITLD (70 aa)).

It belongs to the protein kinase superfamily. AGC Ser/Thr protein kinase family. PKC subfamily.

It carries out the reaction L-seryl-[protein] + ATP = O-phospho-L-seryl-[protein] + ADP + H(+). It catalyses the reaction L-threonyl-[protein] + ATP = O-phospho-L-threonyl-[protein] + ADP + H(+). This chain is Putative protein kinase C delta type homolog, found in Drosophila melanogaster (Fruit fly).